We begin with the raw amino-acid sequence, 1374 residues long: Sterol 3-beta-glucosyltransferase (1374 aa).

The span at methionine 1 to arginine 14 shows a compositional bias: basic and acidic residues. 3 disordered regions span residues methionine 1–asparagine 60, alanine 83–alanine 190, and threonine 206–serine 227. Over residues leucine 16 to proline 28 the composition is skewed to polar residues. Positions phenylalanine 29–aspartate 41 are enriched in basic and acidic residues. The segment covering valine 101 to threonine 112 has biased composition (polar residues). Over residues lysine 125–glycine 138 the composition is skewed to basic and acidic residues. The 50-residue stretch at methionine 234–serine 283 folds into the GRAM 1 domain. One can recognise a PH domain in the interval valine 285–phenylalanine 382. A disordered region spans residues alanine 458–serine 538. 2 stretches are compositionally biased toward basic and acidic residues: residues glutamate 461–glutamate 473 and serine 490–arginine 499. Positions serine 503 to serine 538 are enriched in polar residues. Positions aspartate 704–lysine 770 constitute a GRAM 2 domain. Residues serine 893, arginine 894, aspartate 896, alanine 1196, histidine 1198, histidine 1211, glycine 1215, threonine 1216, aspartate 1235, and glutamine 1236 each contribute to the UDP-alpha-D-glucose site. Over residues alanine 1314–alanine 1325 the composition is skewed to polar residues. Positions alanine 1314 to aspartate 1338 are disordered.

Belongs to the glycosyltransferase 28 family.

It localises to the cytoplasm. It is found in the preautophagosomal structure membrane. The enzyme catalyses a sterol + UDP-alpha-D-glucose = a sterol 3-beta-D-glucoside + UDP + H(+). It carries out the reaction ergosterol + UDP-alpha-D-glucose = ergosteryl 3-beta-D-glucoside + UDP + H(+). Functionally, sterol glycosyltransferase responsible for the glycosylation of ergosterol to form ergosterol-glucoside. The polypeptide is Sterol 3-beta-glucosyltransferase (Penicillium rubens (strain ATCC 28089 / DSM 1075 / NRRL 1951 / Wisconsin 54-1255) (Penicillium chrysogenum)).